A 362-amino-acid chain; its full sequence is MVKKMKKKVVVGMSGGVDSSVTAYLLKEQGYDVIGMTMKVFPGNYHDGSKEKIEDIMKSAKEVCDFLEIPFVEVDLIEEFNKKVATPFMQDYIEGRTPNPCVYCNKHIKFDAFLNKAIELGADYIATGHYANIIEKDGRTLIYRAEDENKDQTYMLYNLKQHQLKHILMPCGDYNKEQIREIAKKIGLKIHNKKDSEEICFIPDDDHGRYIRENCKKKIQEGNFVDEKGKVLGRHKGIINYTIGQRKGLGIALGKPAYVIDIIPEKNQVVLGEEEKIFNNILIAKDVNFIPFDELKEKIKLEAKIRYSAKGEIAEIEPLENNRVKVTFDKKQRAITKGQSVVFYIENLLLGGGIIESVESST.

ATP-binding positions include 12–19 and Met-38; that span reads GMSGGVDS. The active-site Nucleophile is the Cys-104. The cysteines at positions 104 and 200 are disulfide-linked. Gly-128 is an ATP binding site. The interval 150–152 is interaction with tRNA; sequence KDQ. Cys-200 functions as the Cysteine persulfide intermediate in the catalytic mechanism. Positions 306–307 are interaction with tRNA; it reads RY.

The protein belongs to the MnmA/TRMU family.

Its subcellular location is the cytoplasm. It catalyses the reaction S-sulfanyl-L-cysteinyl-[protein] + uridine(34) in tRNA + AH2 + ATP = 2-thiouridine(34) in tRNA + L-cysteinyl-[protein] + A + AMP + diphosphate + H(+). In terms of biological role, catalyzes the 2-thiolation of uridine at the wobble position (U34) of tRNA, leading to the formation of s(2)U34. The polypeptide is tRNA-specific 2-thiouridylase MnmA 1 (Clostridium tetani (strain Massachusetts / E88)).